The following is a 74-amino-acid chain: Protein krueppel (74 aa).

4 consecutive C2H2-type zinc fingers follow at residues 1–4, 10–32, 38–60, and 66–74; these read ERTH, FECQ…MRLH, YRCE…LRVH, and YGCEHCSMK.

It belongs to the krueppel C2H2-type zinc-finger protein family.

It is found in the nucleus. Functionally, krueppel is a gap class segmentation protein. This is Protein krueppel (Kr) from Tribolium castaneum (Red flour beetle).